The following is a 296-amino-acid chain: 33 kDa chaperonin (296 aa).

2 disulfide bridges follow: cysteine 233-cysteine 235 and cysteine 267-cysteine 270.

This sequence belongs to the HSP33 family. In terms of processing, under oxidizing conditions two disulfide bonds are formed involving the reactive cysteines. Under reducing conditions zinc is bound to the reactive cysteines and the protein is inactive.

It is found in the cytoplasm. Its function is as follows. Redox regulated molecular chaperone. Protects both thermally unfolding and oxidatively damaged proteins from irreversible aggregation. Plays an important role in the bacterial defense system toward oxidative stress. This chain is 33 kDa chaperonin, found in Actinobacillus pleuropneumoniae serotype 7 (strain AP76).